A 115-amino-acid polypeptide reads, in one-letter code: U3-lycotoxin-Ls1k (115 aa).

Residues methionine 1–alanine 20 form the signal peptide. Positions glutamate 21–arginine 44 are excised as a propeptide. Cystine bridges form between cysteine 48–cysteine 63, cysteine 55–cysteine 72, cysteine 62–cysteine 87, and cysteine 74–cysteine 85.

Belongs to the neurotoxin 19 (CSTX) family. 01 subfamily. In terms of tissue distribution, expressed by the venom gland.

The protein resides in the secreted. This chain is U3-lycotoxin-Ls1k, found in Lycosa singoriensis (Wolf spider).